The chain runs to 120 residues: MFLLYEYDFFWAFLIISILVPILAFLISGVLAPISKGPEKLSTYESGIEPMGDAWLQFRIRYYMFALVFVVFDVETVFLYPWAMSFDVLGVSVFIEAFIFVLILIIGLVYAWRKGALEWS.

The next 3 membrane-spanning stretches (helical) occupy residues 9 to 29 (FFWAFLIISILVPILAFLISG), 64 to 84 (MFALVFVVFDVETVFLYPWAM), and 88 to 108 (VLGVSVFIEAFIFVLILIIGL).

It belongs to the complex I subunit 3 family. In terms of assembly, NDH is composed of at least 16 different subunits, 5 of which are encoded in the nucleus.

The protein localises to the plastid. The protein resides in the chloroplast thylakoid membrane. The enzyme catalyses a plastoquinone + NADH + (n+1) H(+)(in) = a plastoquinol + NAD(+) + n H(+)(out). It carries out the reaction a plastoquinone + NADPH + (n+1) H(+)(in) = a plastoquinol + NADP(+) + n H(+)(out). NDH shuttles electrons from NAD(P)H:plastoquinone, via FMN and iron-sulfur (Fe-S) centers, to quinones in the photosynthetic chain and possibly in a chloroplast respiratory chain. The immediate electron acceptor for the enzyme in this species is believed to be plastoquinone. Couples the redox reaction to proton translocation, and thus conserves the redox energy in a proton gradient. The chain is NAD(P)H-quinone oxidoreductase subunit 3, chloroplastic from Nicotiana tabacum (Common tobacco).